The following is a 387-amino-acid chain: MQVFWFLPTHGDSRYLGTAEGARQVDQAYLQQVAVAADTLGYEGVLIPTGRSCEDPWIVAASLIPATRRLRFLVAVRPGLVAPTLAARMAATFDRLSQGRLLVNLVTGGDPGELAGDGLFLDHAQRYEASAEFIRIWRETLAASHEGAALDYTGRHLSVKGARVLFPPVQRPHPPVYFGGSSEAAHALAAEQVDTYLTWGEPPAAVAEKIADVRRRAARHGRTVRFGIRLHVIVRETEDAAWQAADTLISKLDDDTVARAQAAFRKMDSAGQQRMAALHANGIRRSRAELEISPNLWAGVGLVRGGAGTALVGDPHTVAARMREYADLGIDTFVLSGYPHLEEAYRFAELVFPLLPRAVRDTLPGSVLNGPFGEVIATGIVPRVAAS.

The protein belongs to the SsuD family.

It catalyses the reaction an alkanesulfonate + FMNH2 + O2 = an aldehyde + FMN + sulfite + H2O + 2 H(+). Functionally, catalyzes the desulfonation of aliphatic sulfonates. The chain is Alkanesulfonate monooxygenase from Ralstonia nicotianae (strain ATCC BAA-1114 / GMI1000) (Ralstonia solanacearum).